Here is a 427-residue protein sequence, read N- to C-terminus: Glutamate-1-semialdehyde 2,1-aminomutase (427 aa).

Lys-265 carries the post-translational modification N6-(pyridoxal phosphate)lysine.

The protein belongs to the class-III pyridoxal-phosphate-dependent aminotransferase family. HemL subfamily. Homodimer. The cofactor is pyridoxal 5'-phosphate.

The protein resides in the cytoplasm. The enzyme catalyses (S)-4-amino-5-oxopentanoate = 5-aminolevulinate. Its pathway is porphyrin-containing compound metabolism; protoporphyrin-IX biosynthesis; 5-aminolevulinate from L-glutamyl-tRNA(Glu): step 2/2. The chain is Glutamate-1-semialdehyde 2,1-aminomutase from Burkholderia ambifaria (strain ATCC BAA-244 / DSM 16087 / CCUG 44356 / LMG 19182 / AMMD) (Burkholderia cepacia (strain AMMD)).